A 158-amino-acid chain; its full sequence is Transcription elongation factor GreA (158 aa).

A coiled-coil region spans residues M1–Q67.

Belongs to the GreA/GreB family.

Its function is as follows. Necessary for efficient RNA polymerase transcription elongation past template-encoded arresting sites. The arresting sites in DNA have the property of trapping a certain fraction of elongating RNA polymerases that pass through, resulting in locked ternary complexes. Cleavage of the nascent transcript by cleavage factors such as GreA or GreB allows the resumption of elongation from the new 3'terminus. GreA releases sequences of 2 to 3 nucleotides. The protein is Transcription elongation factor GreA of Trichlorobacter lovleyi (strain ATCC BAA-1151 / DSM 17278 / SZ) (Geobacter lovleyi).